The primary structure comprises 323 residues: uncharacterized protein (323 aa).

The S4 RNA-binding domain maps to 16 to 95 (QRIDQFCLKI…DKLKIIFEDE (80 aa)). Residue aspartate 148 is part of the active site.

It belongs to the pseudouridine synthase RluA family.

It carries out the reaction a uridine in RNA = a pseudouridine in RNA. This is an uncharacterized protein from Mycoplasma genitalium (strain ATCC 33530 / DSM 19775 / NCTC 10195 / G37) (Mycoplasmoides genitalium).